A 427-amino-acid polypeptide reads, in one-letter code: 12-alpha,13-alpha-dihydroxyfumitremorgin C prenyltransferase (427 aa).

Residue glutamate 94 coordinates substrate. 8 residues coordinate dimethylallyl diphosphate: arginine 105, lysine 192, tyrosine 194, tyrosine 268, glutamine 353, tyrosine 355, tyrosine 419, and tyrosine 423.

Belongs to the tryptophan dimethylallyltransferase family.

It carries out the reaction 12alpha,13alpha-dihydroxyfumitremorgin C + dimethylallyl diphosphate = fumitremorgin B + diphosphate. Its pathway is mycotoxin biosynthesis. Functionally, 12-alpha,13-alpha-dihydroxyfumitremorgin C prenyltransferase; part of the gene cluster that mediates the biosynthesis of fumitremorgins, indole alkaloids that carry not only intriguing chemical structures, but also interesting biological and pharmacological activities. The biosynthesis of fumitremorgin-type alkaloids begins by condensation of the two amino acids L-tryptophan and L-proline to brevianamide F, catalyzed by the non-ribosomal peptide synthetase ftmA. Brevianamide F is then prenylated by the prenyltransferase ftmPT1/ftmB in the presence of dimethylallyl diphosphate, resulting in the formation of tryprostatin B. The three cytochrome P450 monooxygenases, ftmP450-1/ftmC, ftmP450-2/ftmE and ftmP450-3/FtmG, are responsible for the conversion of tryprostatin B to 6-hydroxytryprostatin B, tryprostatin A to fumitremorgin C and fumitremorgin C to 12,13-dihydroxyfumitremorgin C, respectively. The putative methyltransferase ftmMT/ftmD is expected for the conversion of 6-hydroxytryprostatin B to tryprostatin A. FtmPT2/FtmH catalyzes the prenylation of 12,13-dihydroxyfumitre-morgin C in the presence of dimethylallyl diphosphate, resulting in the formation of fumitremorgin B. Fumitremorgin B is further converted to verruculogen by ftmOx1/ftmF via the insertion of an endoperoxide bond between the two prenyl moieties. In some fungal species, verruculogen is further converted to fumitremorgin A, but the enzymes involved in this step have not been identified yet. This is 12-alpha,13-alpha-dihydroxyfumitremorgin C prenyltransferase from Aspergillus fumigatus (strain ATCC MYA-4609 / CBS 101355 / FGSC A1100 / Af293) (Neosartorya fumigata).